Here is a 139-residue protein sequence, read N- to C-terminus: Small ribosomal subunit protein uS12 (139 aa).

Position 102 is a 3-methylthioaspartic acid (Asp102). The tract at residues 116–139 (DTTGVAKRSQGRSKYGAKRPKKSK) is disordered. Positions 124–139 (SQGRSKYGAKRPKKSK) are enriched in basic residues.

It belongs to the universal ribosomal protein uS12 family. As to quaternary structure, part of the 30S ribosomal subunit. Contacts proteins S8 and S17. May interact with IF1 in the 30S initiation complex.

Functionally, with S4 and S5 plays an important role in translational accuracy. Its function is as follows. Interacts with and stabilizes bases of the 16S rRNA that are involved in tRNA selection in the A site and with the mRNA backbone. Located at the interface of the 30S and 50S subunits, it traverses the body of the 30S subunit contacting proteins on the other side and probably holding the rRNA structure together. The combined cluster of proteins S8, S12 and S17 appears to hold together the shoulder and platform of the 30S subunit. This chain is Small ribosomal subunit protein uS12, found in Mesomycoplasma hyopneumoniae (strain 7448) (Mycoplasma hyopneumoniae).